The following is a 918-amino-acid chain: NEDD4-like E3 ubiquitin-protein ligase WWP1 (918 aa).

The C2 domain maps to 1-116; the sequence is MATASPRSDT…THNRKLEKVK (116 aa). Composition is skewed to polar residues over residues 150-164, 209-219, and 235-258; these read TNRS…QQNG, NGENTPSSPSQ, and SAPT…STMG. Disordered stretches follow at residues 150–182 and 209–360; these read TNRS…PRLP and NGEN…PHGR. The segment covering 266–281 has biased composition (low complexity); sequence TTSTSNCTSTTTQEPP. WW domains follow at residues 345–378, 377–410, 452–485, and 492–525; these read EALP…RPQP, QPLP…RPTM, GPLP…DPRT, and EPLP…DPRN. Residues 345-525 form an interaction with ERBB4 region; that stretch reads EALPSGWEQR…RTTTFKDPRN (181 aa). Positions 345-527 are required for interaction with and ubiquitination of AMOTL2. Required for interaction with YAP1; the sequence is EALPSGWEQR…TTFKDPRNGK (183 aa). An HECT domain is found at 584 to 918; that stretch reads KPYDLRRRLY…IEETEGFGQE (335 aa). The active-site Glycyl thioester intermediate is the C886.

In terms of assembly, interacts with the Crumbs complex components PALS1 and PATJ; interaction with the Crumbs complex is enhanced by WWP1's interaction with AMOTL2 and facilitates WWP1 localization to the plasma membrane. Interaction with the Crumbs complex promotes WWP1 monoubiquitination of AMOTL2, which activates the Hippo signaling pathway. Binds SCNN1A, SCNN1B, SCNN1G, WBP1, WBP2, DRPLA and adenovirus type 2 PIII. Interacts with TGIF. Binds KLF2 AND HIVEP3. Interacts with RNF11. Interacts with SPART. Interacts with NDFIP1 and NDFIP2; this interaction activates the E3 ubiquitin-protein ligase. Interacts with ERBB4 isoforms JM-B CYT-1 and JM-A CYT-1. Does not interact with ERB4 isoform JMA-A CYT-2. Interacts with SMAD1, SMAD2, SMAD3, SMAD5, SMAD6, SMAD7, TGFBR1 and TGFBR2. Associates with the TGFBR1:TGFBR2 receptor complex in presence of SMAD7. Interacts with SKIL isoform 1. Interacts with TP63 isoform 1 and isoform 2. Interacts (via WW domains) with ARRDC1, ARRDC2 and ARRDC3. Post-translationally, auto-ubiquitinated and ubiquitinated by RNF11.

It is found in the cytoplasm. The protein resides in the cell membrane. It localises to the nucleus. Its subcellular location is the cell junction. The catalysed reaction is S-ubiquitinyl-[E2 ubiquitin-conjugating enzyme]-L-cysteine + [acceptor protein]-L-lysine = [E2 ubiquitin-conjugating enzyme]-L-cysteine + N(6)-ubiquitinyl-[acceptor protein]-L-lysine.. The protein operates within protein modification; protein ubiquitination. Its activity is regulated as follows. Activated by NDFIP1- and NDFIP2-binding. In terms of biological role, E3 ubiquitin-protein ligase which accepts ubiquitin from an E2 ubiquitin-conjugating enzyme in the form of a thioester and then directly transfers the ubiquitin to targeted substrates. Ubiquitinates and promotes degradation of SMAD2 in response to TGF-beta signaling, which requires interaction with TGIF. Ubiquitinates ERBB4 isoforms JM-A CYT-1 and JM-B CYT-1, KLF2, KLF5 and TP63 and promotes their proteasomal degradation. Ubiquitinates RNF11 without targeting it for degradation. Ubiquitinates and promotes degradation of TGFBR1; the ubiquitination is enhanced by SMAD7. Ubiquitinates SMAD6 and SMAD7. Activates the Hippo signaling pathway in response to cell contact inhibition and recruitment to the Crumbs complex at the cell membrane. Monoubiquitinates AMOTL2 which facilitates its interaction with and activation of LATS2. LATS2 then phosphorylates YAP1, excluding it from the nucleus and therefore ultimately represses YAP1-driven transcription of target genes. The polypeptide is NEDD4-like E3 ubiquitin-protein ligase WWP1 (Wwp1) (Mus musculus (Mouse)).